The chain runs to 308 residues: MRVIFAGTPAVAVPTLAAVAASRHDLVAVLTRPDAPAGRGRGLSRSPVGAWADEHGIEVLTPARPREPEFLDRLRALAPDCVPVVAYGALVPPAALEIPRHGWVNLHFSLLPAWRGAAPVQHALLHGDELTGASVFQLEEGLDTGPVYGTVTDEVRPADTSGDLLERLAHSGAELLIAVLDAIEEGSARAEPQPNDGVSLAPKLTVADARVRWGDPAFAVDRRVRACSPAPGPWTTFRDERVKLGPVTLVAGGPELRPGELLVEKSRVLAGTASTPVQLGEIRAAGKKAMPASDWARGVRVTAGEVLA.

109–112 (SLLP) contacts (6S)-5,6,7,8-tetrahydrofolate.

It belongs to the Fmt family.

The catalysed reaction is L-methionyl-tRNA(fMet) + (6R)-10-formyltetrahydrofolate = N-formyl-L-methionyl-tRNA(fMet) + (6S)-5,6,7,8-tetrahydrofolate + H(+). Its function is as follows. Attaches a formyl group to the free amino group of methionyl-tRNA(fMet). The formyl group appears to play a dual role in the initiator identity of N-formylmethionyl-tRNA by promoting its recognition by IF2 and preventing the misappropriation of this tRNA by the elongation apparatus. In Salinispora tropica (strain ATCC BAA-916 / DSM 44818 / JCM 13857 / NBRC 105044 / CNB-440), this protein is Methionyl-tRNA formyltransferase.